The primary structure comprises 365 residues: Iron-sulfur cluster assembly protein SufC (365 aa).

Positions 118 to 364 (LEINDLHAIE…ESDGYAQFVE (247 aa)) constitute an ABC transporter domain. Residue 152–159 (GRNGSGKS) coordinates ATP.

This sequence belongs to the ABC transporter superfamily. Ycf16 family. Component of a complex composed of SufB, SufC and SufD in a stoichiometric ratio of 1:2:1. Interacts with SufB. Interacts with SufD; the interaction enhances the ATPase activity of SufC.

It localises to the plastid. Its subcellular location is the apicoplast. The catalysed reaction is ATP + H2O = ADP + phosphate + H(+). It participates in cofactor biosynthesis; iron-sulfur cluster biosynthesis. Its function is as follows. Participates in the sulfur mobilization (SUF) pathway for iron-sulfur (Fe-S) cluster biogenesis. As part of a complex consisting of SufB-SufC(2)-SufD, involved in assembly of [4Fe-4S] clusters. Exhibits ATPase activity. In Plasmodium berghei (strain Anka), this protein is Iron-sulfur cluster assembly protein SufC.